The primary structure comprises 328 residues: Tetraacyldisaccharide 4'-kinase (328 aa).

ATP is bound at residue 55–62 (TAGGNGKT).

The protein belongs to the LpxK family.

The enzyme catalyses a lipid A disaccharide + ATP = a lipid IVA + ADP + H(+). The protein operates within glycolipid biosynthesis; lipid IV(A) biosynthesis; lipid IV(A) from (3R)-3-hydroxytetradecanoyl-[acyl-carrier-protein] and UDP-N-acetyl-alpha-D-glucosamine: step 6/6. In terms of biological role, transfers the gamma-phosphate of ATP to the 4'-position of a tetraacyldisaccharide 1-phosphate intermediate (termed DS-1-P) to form tetraacyldisaccharide 1,4'-bis-phosphate (lipid IVA). In Escherichia coli (strain SMS-3-5 / SECEC), this protein is Tetraacyldisaccharide 4'-kinase.